Reading from the N-terminus, the 162-residue chain is Ribonuclease (162 aa).

The N-terminal stretch at 1-29 (MKKISSVFTMFALIAAILFSGFIPQQAYA) is a signal peptide. A propeptide spanning residues 30–53 (ETTLTPTATNKTASIQLTSDVHTL) is cleaved from the precursor. The active-site Proton acceptor is the E125. H154 serves as the catalytic Proton donor.

Belongs to the ribonuclease N1/T1 family.

The protein localises to the secreted. This is a purine-specific ribonuclease. This Bacillus pumilus (Bacillus mesentericus) protein is Ribonuclease.